We begin with the raw amino-acid sequence, 178 residues long: MSRIGNKVIVLPAGVEITNNDNVVTVKGPKGELTREFSKDIEIRVEGTEVTLHRPNDSKEMKTIHGTTRALLNNMVIGVSEGFKKELEMRGVGYRAQLQGKKLVLAVGKSHPDEVEAPEGITFELPNPTTIVISGISKEAVGQTAAYVRSLRAPEPYKGKGIRYVGEFVRRKEGKTGK.

The protein belongs to the universal ribosomal protein uL6 family. Part of the 50S ribosomal subunit.

Its function is as follows. This protein binds to the 23S rRNA, and is important in its secondary structure. It is located near the subunit interface in the base of the L7/L12 stalk, and near the tRNA binding site of the peptidyltransferase center. The protein is Large ribosomal subunit protein uL6 of Streptococcus gordonii (strain Challis / ATCC 35105 / BCRC 15272 / CH1 / DL1 / V288).